Consider the following 68-residue polypeptide: Ribosome modulation factor (68 aa).

It belongs to the ribosome modulation factor family.

It localises to the cytoplasm. In terms of biological role, during stationary phase, converts 70S ribosomes to an inactive dimeric form (100S ribosomes). The protein is Ribosome modulation factor of Saccharophagus degradans (strain 2-40 / ATCC 43961 / DSM 17024).